Reading from the N-terminus, the 713-residue chain is Serologically defined colon cancer antigen 8 (713 aa).

Serine 4 and serine 28 each carry phosphoserine. Residues 84–103 are disordered; it reads QADKESEVSPSRRRKMSPLR. The stretch at 129 to 175 forms a coiled coil; that stretch reads IHHLEAEVKFCKEELSGMKNKIQVVVLENEGLQQQLKSQRQEETLRE. The disordered stretch occupies residues 194-215; that stretch reads EDSGVGETSKRPFSHDNADFGK. Over residues 201–212 the composition is skewed to basic and acidic residues; sequence TSKRPFSHDNAD. Residues 216 to 713 form a sufficient for homodimerization region; that stretch reads AASAGEQLEL…QLPSMPQSDC (498 aa). 2 coiled-coil regions span residues 223–273 and 348–707; these read LELE…LLAA and EEAN…QLPS. The segment at 533-713 is mediates interaction with OFD1; sequence HQLHLTRQEK…QLPSMPQSDC (181 aa).

In terms of assembly, homodimer. Interacts with OFD1; the interaction is direct. Interacts with FAM161A. Interacts with RABEP2, ERC1 and CEP131. In terms of tissue distribution, expressed in thymus, prostate, testis, ovary, small intestine, colon, mucosa, colon and renal cancer tumors.

The protein resides in the cytoplasm. Its subcellular location is the cytoskeleton. It localises to the microtubule organizing center. It is found in the centrosome. The protein localises to the centriole. The protein resides in the cilium basal body. Its subcellular location is the cell junction. In terms of biological role, plays a role in the establishment of cell polarity and epithelial lumen formation. Also plays an essential role in ciliogenesis and subsequent Hedgehog signaling pathway that requires the presence of intact primary cilia for pathway activation. Mechanistically, interacts with and mediates RABEP2 centrosomal localization which is critical for ciliogenesis. The chain is Serologically defined colon cancer antigen 8 (SDCCAG8) from Homo sapiens (Human).